Consider the following 100-residue polypeptide: Large ribosomal subunit protein uL23 (100 aa).

The protein belongs to the universal ribosomal protein uL23 family. Part of the 50S ribosomal subunit. Contacts protein L29, and trigger factor when it is bound to the ribosome.

One of the early assembly proteins it binds 23S rRNA. One of the proteins that surrounds the polypeptide exit tunnel on the outside of the ribosome. Forms the main docking site for trigger factor binding to the ribosome. The protein is Large ribosomal subunit protein uL23 of Synechococcus elongatus (strain ATCC 33912 / PCC 7942 / FACHB-805) (Anacystis nidulans R2).